Here is an 82-residue protein sequence, read N- to C-terminus: U10-myrmicitoxin-Mri1c (82 aa).

The signal sequence occupies residues 1–26 (MRLSYVSLTLAIIFVMAIVHAPETEA). A propeptide spanning residues 27 to 52 (KAYPEADAVGEASAVGEADAVGVADP) is cleaved from the precursor. Position 81 is an isoleucine amide (Ile-81).

The protein belongs to the formicidae venom precursor-01 superfamily. As to expression, expressed by the venom gland.

The protein localises to the secreted. Induces paralysis 5 minutes after injection into blowflies (L.caesar). In most cases is not lethal 24 hours after injection, but paralysis is irreversible. May have antimicrobial properties, like most ant linear peptides. The protein is U10-myrmicitoxin-Mri1c of Manica rubida (European giant red ant).